Here is a 165-residue protein sequence, read N- to C-terminus: V-type proton ATPase 16 kDa proteolipid subunit (165 aa).

The Lumenal portion of the chain corresponds to 1 to 10 (MSSVFSGDET). A helical membrane pass occupies residues 11 to 33 (APFFGFLGAAAALVFSCMGAAYG). At 34 to 55 (TAKSGVGVASMGVMRPELVMKS) the chain is on the cytoplasmic side. The helical transmembrane segment at 56-76 (IVPVVMAGVLGIYGLIIAVII) threads the bilayer. Residues 77–95 (STGINPKAKPYFLFDGYAH) lie on the Lumenal side of the membrane. A helical transmembrane segment spans residues 96–117 (LSSGLACGLAGLAAGMAIGIVG). Residues 118 to 129 (DAGVRANAQQPK) lie on the Cytoplasmic side of the membrane. A helical transmembrane segment spans residues 130–155 (LFVGMILILIFAEALALYGLIVGIIL). At 156-165 (SSRAGQSRAD) the chain is on the lumenal side.

It belongs to the V-ATPase proteolipid subunit family. As to quaternary structure, V-ATPase is a heteromultimeric enzyme composed of a peripheral catalytic V1 complex (main components: subunits A, B, C, D, E, and F) attached to an integral membrane V0 proton pore complex (main component: the proteolipid protein; which is present as a hexamer that forms the proton-conducting pore).

Its subcellular location is the vacuole membrane. Functionally, proton-conducting pore forming subunit of the membrane integral V0 complex of vacuolar ATPase. V-ATPase is responsible for acidifying a variety of intracellular compartments in eukaryotic cells. The sequence is that of V-type proton ATPase 16 kDa proteolipid subunit (VATP-P1) from Avena sativa (Oat).